A 338-amino-acid polypeptide reads, in one-letter code: Ribosomal RNA small subunit methyltransferase C (338 aa).

It belongs to the methyltransferase superfamily. RsmC family. As to quaternary structure, monomer.

The protein resides in the cytoplasm. It catalyses the reaction guanosine(1207) in 16S rRNA + S-adenosyl-L-methionine = N(2)-methylguanosine(1207) in 16S rRNA + S-adenosyl-L-homocysteine + H(+). Its function is as follows. Specifically methylates the guanine in position 1207 of 16S rRNA in the 30S particle. This chain is Ribosomal RNA small subunit methyltransferase C, found in Photorhabdus laumondii subsp. laumondii (strain DSM 15139 / CIP 105565 / TT01) (Photorhabdus luminescens subsp. laumondii).